A 295-amino-acid polypeptide reads, in one-letter code: Ribosomal RNA small subunit methyltransferase A (295 aa).

S-adenosyl-L-methionine-binding residues include Asn-29, Leu-31, Gly-56, Glu-77, Asp-102, and Asn-128.

This sequence belongs to the class I-like SAM-binding methyltransferase superfamily. rRNA adenine N(6)-methyltransferase family. RsmA subfamily.

The protein localises to the cytoplasm. The catalysed reaction is adenosine(1518)/adenosine(1519) in 16S rRNA + 4 S-adenosyl-L-methionine = N(6)-dimethyladenosine(1518)/N(6)-dimethyladenosine(1519) in 16S rRNA + 4 S-adenosyl-L-homocysteine + 4 H(+). Functionally, specifically dimethylates two adjacent adenosines (A1518 and A1519) in the loop of a conserved hairpin near the 3'-end of 16S rRNA in the 30S particle. May play a critical role in biogenesis of 30S subunits. This Listeria monocytogenes serovar 1/2a (strain ATCC BAA-679 / EGD-e) protein is Ribosomal RNA small subunit methyltransferase A.